A 471-amino-acid chain; its full sequence is Maintenance of mitochondrial morphology protein 1 (471 aa).

Residues 1–21 (MSSPQNTSCPPSQHSLSFTQG) lie on the Lumenal side of the membrane. The chain crosses the membrane as a helical span at residues 22-42 (LLLGQLSVVLLIGAFIKFFIF). Topologically, residues 43 to 471 (GESPSSSSRG…GSLPGAPAVA (429 aa)) are cytoplasmic. An SMP-LTD domain is found at 128 to 370 (QPESLDWFNV…EPRVQLVALP (243 aa)). Disordered stretches follow at residues 271-306 (GTTESSPHLPHPENQNESKPSRQDPEIPTNKDGVRS), 395-415 (EDPATKATHSGFTPVNANRDG), and 448-471 (RGDTQSVGEQLRIPGSLPGAPAVA). Positions 280–295 (PHPENQNESKPSRQDP) are enriched in basic and acidic residues. Positions 401-410 (ATHSGFTPVN) are enriched in polar residues.

It belongs to the MMM1 family. As to quaternary structure, homodimer. Component of the ER-mitochondria encounter structure (ERMES) or MDM complex, composed of MMM1, MDM10, MDM12 and MDM34. An MMM1 homodimer associates with one molecule of MDM12 on each side in a pairwise head-to-tail manner, and the SMP-LTD domains of MMM1 and MDM12 generate a continuous hydrophobic tunnel for phospholipid trafficking.

The protein resides in the endoplasmic reticulum membrane. Functionally, component of the ERMES/MDM complex, which serves as a molecular tether to connect the endoplasmic reticulum (ER) and mitochondria. Components of this complex are involved in the control of mitochondrial shape and protein biogenesis, and function in nonvesicular lipid trafficking between the ER and mitochondria. The MDM12-MMM1 subcomplex functions in the major beta-barrel assembly pathway that is responsible for biogenesis of all outer membrane beta-barrel proteins, and acts in a late step after the SAM complex. The MDM10-MDM12-MMM1 subcomplex further acts in the TOM40-specific pathway after the action of the MDM12-MMM1 complex. Essential for establishing and maintaining the structure of mitochondria and maintenance of mtDNA nucleoids. The sequence is that of Maintenance of mitochondrial morphology protein 1 from Arthroderma otae (strain ATCC MYA-4605 / CBS 113480) (Microsporum canis).